Consider the following 297-residue polypeptide: ER membrane protein complex subunit 2 (297 aa).

N-acetylalanine is present on Ala2. TPR repeat units lie at residues 87–120, 155–188, and 192–225; these read HRVK…DPTN, QEAW…NPYN, and CQQY…NNRN. At Lys255 the chain carries N6-acetyllysine.

Belongs to the EMC2 family. In terms of assembly, component of the ER membrane protein complex (EMC).

It is found in the endoplasmic reticulum membrane. In terms of biological role, part of the endoplasmic reticulum membrane protein complex (EMC) that enables the energy-independent insertion into endoplasmic reticulum membranes of newly synthesized membrane proteins. Preferentially accommodates proteins with transmembrane domains that are weakly hydrophobic or contain destabilizing features such as charged and aromatic residues. Involved in the cotranslational insertion of multi-pass membrane proteins in which stop-transfer membrane-anchor sequences become ER membrane spanning helices. It is also required for the post-translational insertion of tail-anchored/TA proteins in endoplasmic reticulum membranes. By mediating the proper cotranslational insertion of N-terminal transmembrane domains in an N-exo topology, with translocated N-terminus in the lumen of the ER, controls the topology of multi-pass membrane proteins like the G protein-coupled receptors. By regulating the insertion of various proteins in membranes, it is indirectly involved in many cellular processes. This chain is ER membrane protein complex subunit 2, found in Bos taurus (Bovine).